The sequence spans 234 residues: Large ribosomal subunit protein uL1 (234 aa).

The protein belongs to the universal ribosomal protein uL1 family. Part of the 50S ribosomal subunit.

Its function is as follows. Binds directly to 23S rRNA. The L1 stalk is quite mobile in the ribosome, and is involved in E site tRNA release. In terms of biological role, protein L1 is also a translational repressor protein, it controls the translation of the L11 operon by binding to its mRNA. The protein is Large ribosomal subunit protein uL1 of Baumannia cicadellinicola subsp. Homalodisca coagulata.